The chain runs to 371 residues: N-acetyldiaminopimelate deacetylase (371 aa).

Asp-68 is a catalytic residue. Glu-127 acts as the Proton acceptor in catalysis.

This sequence belongs to the peptidase M20A family. N-acetyldiaminopimelate deacetylase subfamily.

The enzyme catalyses N-acetyl-(2S,6S)-2,6-diaminopimelate + H2O = (2S,6S)-2,6-diaminopimelate + acetate. It functions in the pathway amino-acid biosynthesis; L-lysine biosynthesis via DAP pathway; LL-2,6-diaminopimelate from (S)-tetrahydrodipicolinate (acetylase route): step 3/3. Functionally, catalyzes the conversion of N-acetyl-diaminopimelate to diaminopimelate and acetate. The sequence is that of N-acetyldiaminopimelate deacetylase from Listeria monocytogenes serotype 4a (strain HCC23).